The sequence spans 248 residues: tRNA uridine(34) hydroxylase (248 aa).

The Rhodanese domain occupies 127–221; the sequence is RGRPLVLLDT…YFEEVGGEGY (95 aa). Cys-181 (cysteine persulfide intermediate) is an active-site residue.

The protein belongs to the TrhO family.

It catalyses the reaction uridine(34) in tRNA + AH2 + O2 = 5-hydroxyuridine(34) in tRNA + A + H2O. In terms of biological role, catalyzes oxygen-dependent 5-hydroxyuridine (ho5U) modification at position 34 in tRNAs. In Xanthomonas axonopodis pv. citri (strain 306), this protein is tRNA uridine(34) hydroxylase.